We begin with the raw amino-acid sequence, 577 residues long: PTS system lactose-specific EIICB component (577 aa).

The PTS EIIC type-3 domain maps to 4-405 (VFDKLKPVFE…VLDVAIYFPF (402 aa)). Transmembrane regions (helical) follow at residues 27-47 (GFIA…VAYV), 63-83 (LMVA…GTTA), 100-120 (INPV…SILP), 133-153 (QGLI…YVCI), 176-196 (LIPM…FKAA), 219-239 (YLGL…GVQG), 280-300 (VMNF…LFAA), 326-346 (FGMP…TPIV), and 386-406 (LAFV…FPFI). Positions 476–577 (EVDVLVLCAG…MALDFVESNL (102 aa)) constitute a PTS EIIB type-3 domain. Cys-483 serves as the catalytic Phosphocysteine intermediate; for EIIB activity. Cys-483 carries the phosphocysteine; by EIIA modification.

It is found in the cell membrane. It carries out the reaction lactose(out) + N(pros)-phospho-L-histidyl-[protein] = lactose 6-phosphate(in) + L-histidyl-[protein]. The phosphoenolpyruvate-dependent sugar phosphotransferase system (sugar PTS), a major carbohydrate active transport system, catalyzes the phosphorylation of incoming sugar substrates concomitantly with their translocation across the cell membrane. The enzyme II LacEF PTS system is involved in lactose transport. This is PTS system lactose-specific EIICB component from Lacticaseibacillus casei (Lactobacillus casei).